The chain runs to 321 residues: uncharacterized protein (321 aa).

Residues 280–306 (NSDHINNENNTNSNNDDNSNNSNNNNE) form a disordered region. Positions 286-306 (NENNTNSNNDDNSNNSNNNNE) are enriched in low complexity.

This is an uncharacterized protein from Dictyostelium discoideum (Social amoeba).